The chain runs to 381 residues: MKIVADENIPLLQPFFGSMGEIHTLPGREISNQHLRDADVLLVRSVTKVDERLLENTGVKFVGSATIGCNHVDLDYLTSRGIGFSNAPGCNASAVVEYVVSCLSVLSEQLGFELEDKTVGIIGRGEIGGRLERALTLLGLEVKSNDPPKEAAGEQNLFSLEEVLQCDIITLHTPLTDSGSYPTRELLNATIIENLRPDQILINTCRGEVIDEAALKGRLQKGDGLTVALDVWNNEPAIDVELAMLCHFATPHIAGYTLDGRTAGTEIIYQHLSRYLGLPVRHKLGQFLPEPPLRRMAFSSGVDPDWALHTAIRASYDVRHDDSQLKRTLRLDAPMRAQEFDRLRREYRVRRGFDRIKIELKGGKADLLATLSAVGFNLSSK.

Substrate is bound by residues serine 45 and threonine 66. Aspartate 146 and threonine 173 together coordinate NAD(+). The active site involves arginine 206. Aspartate 230 is an NAD(+) binding site. Residue glutamate 235 is part of the active site. The active-site Proton donor is histidine 252. Residue glycine 255 coordinates NAD(+). Position 256 (tyrosine 256) interacts with substrate.

The protein belongs to the D-isomer specific 2-hydroxyacid dehydrogenase family. PdxB subfamily. As to quaternary structure, homodimer.

It localises to the cytoplasm. The catalysed reaction is 4-phospho-D-erythronate + NAD(+) = (R)-3-hydroxy-2-oxo-4-phosphooxybutanoate + NADH + H(+). The protein operates within cofactor biosynthesis; pyridoxine 5'-phosphate biosynthesis; pyridoxine 5'-phosphate from D-erythrose 4-phosphate: step 2/5. Catalyzes the oxidation of erythronate-4-phosphate to 3-hydroxy-2-oxo-4-phosphonooxybutanoate. In Hahella chejuensis (strain KCTC 2396), this protein is Erythronate-4-phosphate dehydrogenase.